The sequence spans 1655 residues: Protein scribble homolog (1655 aa).

The tract at residues 1 to 818 (MLKCIPLWRC…MRVWRERMVE (818 aa)) is sufficient for targeting to adherens junction and to inhibit cell proliferation. Ser37 carries the post-translational modification Phosphoserine. LRR repeat units follow at residues 37 to 58 (SLEE…FFRL), 60 to 81 (NLRK…VANF), 83 to 104 (QLVE…IKFC), 106 to 127 (ALEI…FTQL), 129 to 150 (SLAH…VGNL), 152 to 174 (NLVT…SFLV), 175 to 197 (KLEQ…GALP), 198 to 219 (NLRE…LGNL), 221 to 243 (RLVC…GGLV), 244 to 265 (LLTD…IGQL), 267 to 288 (QLSI…IGDC), 290 to 312 (NLSE…GKLT), 313 to 334 (KLTN…IGGC), 336 to 357 (ALSV…LAHT), 359 to 381 (ELHV…THLN), and 382 to 402 (LKAL…QTED). Position 378 is a phosphothreonine (Thr378). Disordered regions lie at residues 417–440 (PQQP…WSDA), 459–606 (DAEE…IRKD), and 628–702 (LLQG…VSAP). A coiled-coil region spans residues 458 to 474 (EDAEEAAAEKRGLQRRA). At Thr475 the chain carries Phosphothreonine. Positions 479-494 (SELKVMKRSIEGRRSE) are enriched in basic and acidic residues. A Phosphoserine modification is found at Ser504. Residues 537–555 (EGPSAEAQGGSQQEATTAG) show a composition bias toward low complexity. Acidic residues-rich tracts occupy residues 556-565 (GEEDAEEDYQ) and 660-694 (EEEE…EEDK). A coiled-coil region spans residues 656-701 (RAQKEEEEEEEGSPQEEEEEEEEENRAEEEEASTEEEDKEGAVVSA). Ser688 carries the post-translational modification Phosphoserine. Thr689 is modified (phosphothreonine). Ser708 and Ser764 each carry phosphoserine. The segment at 717–1229 (IEPARIEEEE…SLESISSIDR (513 aa)) is interaction with ARHGEF7. The PDZ 1 domain occupies 728 to 815 (TLTILRQTGG…AVQMRVWRER (88 aa)). The segment at 728–1194 (TLTILRQTGG…TVLVCDGFEA (467 aa)) is required for interaction with VIM. The residue at position 826 (Thr826) is a Phosphothreonine. The interval 827–853 (PLRPEDDYSPRERRGGGLRLPLLPPES) is disordered. The segment covering 829–841 (RPEDDYSPRERRG) has biased composition (basic and acidic residues). Phosphoserine is present on residues Ser835, Ser853, Ser875, and Ser939. PDZ domains lie at 862–950 (VACL…EREA), 1004–1093 (EIRL…RRDP), and 1100–1194 (ELCI…GFEA). Residues 1105 to 1117 (KAPGERLGISIRG) form an interaction with tick-borne encephalitis virus RNA-directed RNA polymerase NS5 region. 11 positions are modified to phosphoserine: Ser1140, Ser1220, Ser1223, Ser1226, Ser1232, Ser1276, Ser1279, Ser1295, Ser1298, Ser1306, and Ser1309. Over residues 1227–1242 (IDRELSPEGPGKEKEL) the composition is skewed to basic and acidic residues. The interval 1227–1246 (IDRELSPEGPGKEKELPGQT) is disordered. Residues 1277–1489 (AGSVQRVPSG…APERALSPAE (213 aa)) form a disordered region. The segment covering 1302–1311 (QQPPSPPSPD) has biased composition (pro residues). The residue at position 1342 (Thr1342) is a Phosphothreonine. A Phosphoserine modification is found at Ser1348. The segment covering 1353–1365 (SFRERQKYFELEV) has biased composition (basic and acidic residues). A Phosphoserine modification is found at Ser1378. Residues 1379 to 1419 (LVGADDLRKMQEEEARKLQQKRAQMLREAAEAGAEARLALD) adopt a coiled-coil conformation. Over residues 1383 to 1395 (DDLRKMQEEEARK) the composition is skewed to basic and acidic residues. The segment covering 1409 to 1421 (EAGAEARLALDGE) has biased composition (low complexity). Residues 1422 to 1432 (TLGEEEQEDEQ) are compositionally biased toward acidic residues. Residues Ser1437, Ser1445, and Ser1448 each carry the phosphoserine modification. The segment covering 1461–1472 (AKAERRHQERLR) has biased composition (basic and acidic residues). Phosphoserine occurs at positions 1475, 1486, and 1508. Residues 1520–1568 (LSRSQEGRGTRGPLERLAEAPSPAPTPSPTPVEDLGPQTSTSPGRLPLS) are disordered. Residues 1524–1537 (QEGRGTRGPLERLA) show a composition bias toward basic and acidic residues. Ser1541 carries the post-translational modification Phosphoserine. The residue at position 1545 (Thr1545) is a Phosphothreonine. Residues Ser1547, Ser1561, and Ser1591 each carry the phosphoserine modification. The interval 1622–1655 (GRPSPGAVGPEDVALCSSRRPVRPGRRGLGPVPS) is disordered.

The protein belongs to the LAP (LRR and PDZ) protein family. Interacts with UBE3A. Interacts with PAK1 and PAK2. Interacts (via PDZ domains) with VANGL2. Interacts (via PDZ domains) with LPP and TRIP6; the interaction is direct. Interacts (via PDZ domains) with TJP2. Interacts (via PDZ domains) with APC; may mediate APC targeting to adherens junctions of epithelial cells. Interacts (via PDZ domains) with TSHR; regulates TSHR trafficking and function. Interacts with ARHGEF7 and GIT1; interacts directly with ARHGEF7. Interacts with CTNNB1. Interacts with MAPK12. Interacts (via PDZ domains 1 and 3) with MCC. Interacts with DLG5. Interacts with STK4/MST1 and LATS1 in the presence of DLG5. Interacts (via PDZ domain 3) with CRTAM (via PDZ-binding motif); the interaction promotes CRTAM and SCRIB polarization in a subset of CD4+ T-cells. Interacts with YES1, when YES1 is in a closed conformation; the interaction facilitates YES1 autophosphorylation. Interacts (via PDZ domains) with VIM; the interaction protects SCRIB from proteasomal degradation and facilitates SCRIB localization to intermediate filaments, the interaction is reduced by cell contact inhibition. As to quaternary structure, (Microbial infection) Interacts (via fourth PDZ domain) with tick-borne encephalitis virus RNA-directed RNA polymerase NS5; this interaction targets viral NS5 to the cell membrane periphery and nucleus and prevents STAT1 phosphorylation, and thus, the activation of the JAK-STAT signaling pathway. Interacts with HPV E6. Interacts with influenza A virus protein NS1; the interaction results in the translocation of SCRIB from the cell membrane to perinuclear puncta. Ubiquitinated; targeted for UBE3A-dependent multiubiquitination in the presence of high-risk HPV E6 proteins and degraded. Post-translationally, palmitoylated. Could be depalmitoylated by LYPLA1 and/or LYPLA2. Palmitoylation of SCRIB by ZDHHC7 is required for its localization to cell-cell junctions, function in the establishement of epithelial cell polarity and the regulation of downstream signaling pathways important for epithelial cell differentiation. As to expression, expressed in kidney, skeletal muscles, liver, lung, breast, intestine, placenta and skin mainly in epithelial cells (at protein level).

The protein resides in the cell membrane. It is found in the cell junction. The protein localises to the adherens junction. It localises to the cell projection. Its subcellular location is the lamellipodium. The protein resides in the cytoplasm. It is found in the postsynapse. The protein localises to the presynapse. In terms of biological role, scaffold protein involved in different aspects of polarized cell differentiation regulating epithelial and neuronal morphogenesis and T-cell polarization. Via its interaction with CRTAM, required for the late phase polarization of a subset of CD4+ T-cells, which in turn regulates TCR-mediated proliferation and IFNG and IL22 production. Plays a role in cell directional movement, cell orientation, cell sheet organization and Golgi complex polarization at the cell migration front. Promotes epithelial cell layer barrier function via maintaining cell-cell adhesion. Most probably functions in the establishment of apico-basal cell polarity. May function in cell proliferation regulating progression from G1 to S phase and as a positive regulator of apoptosis for instance during acinar morphogenesis of the mammary epithelium. May regulate cell invasion via MAPK-mediated cell migration and adhesion. May play a role in exocytosis and in the targeting of synaptic vesicles to synapses. Functions as an activator of Rac GTPase activity. This chain is Protein scribble homolog, found in Homo sapiens (Human).